The primary structure comprises 228 residues: Cytochrome c biogenesis ATP-binding export protein CcmA (228 aa).

The region spanning 2 to 227 (LSIERLGVGR…LHLERSGAWL (226 aa)) is the ABC transporter domain. 34–41 (GANGSGKT) is an ATP binding site. Positions 106–126 (GAPDGTSSVPASGRSGVAAPP) are disordered.

The protein belongs to the ABC transporter superfamily. CcmA exporter (TC 3.A.1.107) family. The complex is composed of two ATP-binding proteins (CcmA) and two transmembrane proteins (CcmB).

Its subcellular location is the cell inner membrane. The enzyme catalyses heme b(in) + ATP + H2O = heme b(out) + ADP + phosphate + H(+). Part of the ABC transporter complex CcmAB involved in the biogenesis of c-type cytochromes; once thought to export heme, this seems not to be the case, but its exact role is uncertain. Responsible for energy coupling to the transport system. The chain is Cytochrome c biogenesis ATP-binding export protein CcmA from Paraburkholderia xenovorans (strain LB400).